Reading from the N-terminus, the 95-residue chain is Phosphoribosyl-ATP pyrophosphatase (95 aa).

Belongs to the PRA-PH family.

Its subcellular location is the cytoplasm. It catalyses the reaction 1-(5-phospho-beta-D-ribosyl)-ATP + H2O = 1-(5-phospho-beta-D-ribosyl)-5'-AMP + diphosphate + H(+). The protein operates within amino-acid biosynthesis; L-histidine biosynthesis; L-histidine from 5-phospho-alpha-D-ribose 1-diphosphate: step 2/9. The chain is Phosphoribosyl-ATP pyrophosphatase from Sulfolobus acidocaldarius (strain ATCC 33909 / DSM 639 / JCM 8929 / NBRC 15157 / NCIMB 11770).